The primary structure comprises 62 residues: Disintegrin atropoimin (62 aa).

Residues 1–62 (EAGEECDCGT…ADCPRNGLYG (62 aa)) enclose the Disintegrin domain. Intrachain disulfides connect cysteine 6–cysteine 21, cysteine 8–cysteine 16, cysteine 15–cysteine 38, cysteine 29–cysteine 35, and cysteine 34–cysteine 48. Residues 41 to 42 (GD) carry the Cell attachment site motif.

This sequence belongs to the venom metalloproteinase (M12B) family. P-II subfamily. P-IIa sub-subfamily. Monomer. As to expression, expressed by the venom gland.

The protein localises to the secreted. In terms of biological role, inhibits ADP- (IC(50)=63 nM) and collagen-induced (IC(50)=53 nM) aggregation of human platelets. In vitro, inhibits adhesion of endothelial cells to vitronectin, type-I collagen and, to a lower degree, fibronectin and laminin. In Metlapilcoatlus mexicanus (Central American jumping pitviper), this protein is Disintegrin atropoimin.